The primary structure comprises 232 residues: Adenosylcobinamide-GDP ribazoletransferase (232 aa).

6 helical membrane-spanning segments follow: residues 32 to 52 (PIYFPLVGYIPGILFFFGGSF), 54 to 74 (NFLLKILFLILGYYFFDLFHF), 102 to 122 (VGPFAVFFGTLYVVVFWTLYL), 126 to 146 (PITFIYSSVFGRYSMNLLMFF), 172 to 192 (FFLLPLLFSMKYFFISYVVTV), and 212 to 232 (DVLGGACLMTNGLLLVVLGVV).

It belongs to the CobS family. The cofactor is Mg(2+).

The protein resides in the cell inner membrane. It carries out the reaction alpha-ribazole + adenosylcob(III)inamide-GDP = adenosylcob(III)alamin + GMP + H(+). The enzyme catalyses alpha-ribazole 5'-phosphate + adenosylcob(III)inamide-GDP = adenosylcob(III)alamin 5'-phosphate + GMP + H(+). It participates in cofactor biosynthesis; adenosylcobalamin biosynthesis; adenosylcobalamin from cob(II)yrinate a,c-diamide: step 7/7. Joins adenosylcobinamide-GDP and alpha-ribazole to generate adenosylcobalamin (Ado-cobalamin). Also synthesizes adenosylcobalamin 5'-phosphate from adenosylcobinamide-GDP and alpha-ribazole 5'-phosphate. The polypeptide is Adenosylcobinamide-GDP ribazoletransferase (Thermosipho melanesiensis (strain DSM 12029 / CIP 104789 / BI429)).